The sequence spans 352 residues: Forkhead box protein D5 (352 aa).

Disordered stretches follow at residues 1–32 (MSLS…LGED) and 47–92 (HSEM…GKAK). Residues 20-32 (SDEEDEIDILGED) are compositionally biased toward acidic residues. Positions 73–82 (ESEGGTSKDS) are enriched in low complexity. Residues 97 to 191 (KPPYSYIALI…DNGSFLRRRK (95 aa)) constitute a DNA-binding region (fork-head).

In terms of tissue distribution, expression begins in the newly forming dorsal mesoderm and is maintained during gastrulation at the dorsal blastopore lip (Spemann organizer). At the early neurula stages, expressed in a row of cells along the dorsal midline that are destined to become the fllor plate of the neural tube. At late neurula, expressed within the anterior and posterior poles of the embryo. After neural closure, expression is detected only in the tailtip, the otic vesicle and at the midbrain/hindbrain boundary.

Its subcellular location is the nucleus. In terms of biological role, transcriptional repressor. This is Forkhead box protein D5 from Xenopus tropicalis (Western clawed frog).